A 723-amino-acid chain; its full sequence is 1,3-beta-galactosyl-N-acetylhexosamine phosphorylase Cphy0577 (723 aa).

Catalysis depends on D317, which acts as the Proton donor.

The protein belongs to the glycoside hydrolase 112 family.

The catalysed reaction is beta-D-galactosyl-(1-&gt;3)-N-acetyl-D-glucosamine + phosphate = alpha-D-galactose 1-phosphate + N-acetyl-D-glucosamine. In terms of biological role, reversibly phosphorolyzes beta-D-galactopyranosyl-(1-&gt;3)-N-acetyl-D-glucosamine to form alpha-D-galactopyranose 1-phosphate and acetyl-D-glucosamine. Active towards galacto-N-biose and lacto-N-biose. Does not phosphorolyze galacto-N-tetraose or lacto-N-tetraose. In the reverse reaction has activity toward N-acetyl-D-glucosamine and N-acetyl-D-galactosamine, but not L-rhamnose, D-glucose or D-galactose. This is 1,3-beta-galactosyl-N-acetylhexosamine phosphorylase Cphy0577 from Lachnoclostridium phytofermentans (strain ATCC 700394 / DSM 18823 / ISDg) (Clostridium phytofermentans).